Consider the following 565-residue polypeptide: CTP synthase (565 aa).

The tract at residues 1 to 268 (MQTKYIFVTG…GELVVDRFYP (268 aa)) is amidoligase domain. Ser-14 serves as a coordination point for CTP. Ser-14 serves as a coordination point for UTP. An ATP-binding site is contributed by 15-20 (SLGKGI). Tyr-55 contacts L-glutamine. Asp-72 is a binding site for ATP. Mg(2+)-binding residues include Asp-72 and Glu-142. CTP is bound by residues 149–151 (DIE), 189–194 (KTKPTQ), and Lys-225. UTP is bound by residues 189-194 (KTKPTQ) and Lys-225. A Glutamine amidotransferase type-1 domain is found at 301-543 (PIALVGKYVE…VRACTAYAHE (243 aa)). Gly-363 contacts L-glutamine. Cys-390 acts as the Nucleophile; for glutamine hydrolysis in catalysis. Residues 391–394 (LGLQ), Glu-414, and Arg-471 each bind L-glutamine. Catalysis depends on residues His-516 and Glu-518. Residues 545-565 (DLVTSPQPPERKAVPLASVDM) form a disordered region.

The protein belongs to the CTP synthase family. As to quaternary structure, homotetramer.

It catalyses the reaction UTP + L-glutamine + ATP + H2O = CTP + L-glutamate + ADP + phosphate + 2 H(+). It carries out the reaction L-glutamine + H2O = L-glutamate + NH4(+). The enzyme catalyses UTP + NH4(+) + ATP = CTP + ADP + phosphate + 2 H(+). It participates in pyrimidine metabolism; CTP biosynthesis via de novo pathway; CTP from UDP: step 2/2. With respect to regulation, allosterically activated by GTP, when glutamine is the substrate; GTP has no effect on the reaction when ammonia is the substrate. The allosteric effector GTP functions by stabilizing the protein conformation that binds the tetrahedral intermediate(s) formed during glutamine hydrolysis. Inhibited by the product CTP, via allosteric rather than competitive inhibition. Its function is as follows. Catalyzes the ATP-dependent amination of UTP to CTP with either L-glutamine or ammonia as the source of nitrogen. Regulates intracellular CTP levels through interactions with the four ribonucleotide triphosphates. The polypeptide is CTP synthase (Salinibacter ruber (strain DSM 13855 / M31)).